We begin with the raw amino-acid sequence, 140 residues long: MTLNLCVLTPNRTVWDSKVNEIILSTNNGQIGVLPDHASIATAVDIGILRIRLNDQWLTMALMGGFARIGNNEITVLVNDAEKSSDIDSQEAQQTLEIAEANLRKAEGKRQKIEANLALRRARTRVETINAISELVGVPE.

It belongs to the ATPase epsilon chain family. In terms of assembly, F-type ATPases have 2 components, CF(1) - the catalytic core - and CF(0) - the membrane proton channel. CF(1) has five subunits: alpha(3), beta(3), gamma(1), delta(1), epsilon(1). CF(0) has three main subunits: a, b and c.

It localises to the plastid. The protein localises to the chloroplast thylakoid membrane. Functionally, produces ATP from ADP in the presence of a proton gradient across the membrane. The protein is ATP synthase epsilon chain, chloroplastic of Panax ginseng (Korean ginseng).